A 467-amino-acid polypeptide reads, in one-letter code: 3-isopropylmalate dehydratase large subunit (467 aa).

[4Fe-4S] cluster-binding residues include cysteine 347, cysteine 407, and cysteine 410.

This sequence belongs to the aconitase/IPM isomerase family. LeuC type 1 subfamily. As to quaternary structure, heterodimer of LeuC and LeuD. It depends on [4Fe-4S] cluster as a cofactor.

It catalyses the reaction (2R,3S)-3-isopropylmalate = (2S)-2-isopropylmalate. The protein operates within amino-acid biosynthesis; L-leucine biosynthesis; L-leucine from 3-methyl-2-oxobutanoate: step 2/4. In terms of biological role, catalyzes the isomerization between 2-isopropylmalate and 3-isopropylmalate, via the formation of 2-isopropylmaleate. The polypeptide is 3-isopropylmalate dehydratase large subunit (Synechococcus sp. (strain JA-3-3Ab) (Cyanobacteria bacterium Yellowstone A-Prime)).